The primary structure comprises 491 residues: MALLRGLLVLSLSCLQGPCFTFSPVSAVDLPGQQPVSEQAQQKLPLPALFKLDNQDFGDHATLKRSPGHCKSVPTAEETRRLAQAMMAFTTDLFSLVAQTSTSSNLVLSPLSVALALSHLALGAQNQTLHSLHRVLHMNTGSCLPHLLSHFYQNLGPGTIRLAARIYLQKGFPIKDDFLEQSERLFGAKPVKLTGKQEEDLANINQWVKEATEGKIEDFLSELPDSTVLLLLNAIHFHGFWRTKFDPSLTQKDFFHLDERFTVSVDMMHAVSYPLRWFLLEQPEIQVAHFPFKNNMSFVVVMPTYFEWNVSEVLANLTWDTLYHPSLQERPTKVWLPKLHLQQQLDLVATLSQLGLQELFQGPDLRGISEQNLVVSSVQHQSTMELSEAGVEAAAATSVAMNRMSLSSFTVNRPFLFFIMEDTIGVPLFVGSVRNPNPSALPQLQEQRDSPDNRLIGQNDKADFHGGKTFGPDLKLAPRMEEDYPQFSSPK.

The signal sequence occupies residues 1 to 27 (MALLRGLLVLSLSCLQGPCFTFSPVSA). Residues 28–39 (VDLPGQQPVSEQ) constitute a propeptide that is removed on maturation. A disulfide bridge links Cys70 with Cys143. 4 N-linked (GlcNAc...) asparagine glycosylation sites follow: Asn126, Asn295, Asn309, and Asn316. The disordered stretch occupies residues 439-491 (SALPQLQEQRDSPDNRLIGQNDKADFHGGKTFGPDLKLAPRMEEDYPQFSSPK). A Sulfotyrosine modification is found at Tyr484.

Belongs to the serpin family. Forms protease inhibiting heterodimer with TMPRSS7. Proteolytically cleaved at Pro-35 by both the prolyl endopeptidase FAP form and antiplasmin-cleaving enzyme FAP soluble form to generate mature alpha-2-antiplasmin. Expressed by the liver and secreted in plasma.

It localises to the secreted. Serine protease inhibitor. The major targets of this inhibitor are plasmin and trypsin, but it also inactivates matriptase-3/TMPRSS7 and chymotrypsin. This Mus musculus (Mouse) protein is Alpha-2-antiplasmin (Serpinf2).